A 334-amino-acid chain; its full sequence is Glycerol-3-phosphate dehydrogenase [NAD(P)+] (334 aa).

NADPH contacts are provided by Ser-14, Tyr-15, Arg-35, and Lys-109. Lys-109, Gly-138, and Thr-140 together coordinate sn-glycerol 3-phosphate. Ala-142 serves as a coordination point for NADPH. Sn-glycerol 3-phosphate is bound by residues Lys-194, Asp-247, Ser-257, Arg-258, and Asn-259. Lys-194 (proton acceptor) is an active-site residue. Arg-258 is an NADPH binding site. Positions 282 and 284 each coordinate NADPH.

This sequence belongs to the NAD-dependent glycerol-3-phosphate dehydrogenase family.

The protein localises to the cytoplasm. It carries out the reaction sn-glycerol 3-phosphate + NAD(+) = dihydroxyacetone phosphate + NADH + H(+). It catalyses the reaction sn-glycerol 3-phosphate + NADP(+) = dihydroxyacetone phosphate + NADPH + H(+). Its pathway is membrane lipid metabolism; glycerophospholipid metabolism. In terms of biological role, catalyzes the reduction of the glycolytic intermediate dihydroxyacetone phosphate (DHAP) to sn-glycerol 3-phosphate (G3P), the key precursor for phospholipid synthesis. In Colwellia psychrerythraea (strain 34H / ATCC BAA-681) (Vibrio psychroerythus), this protein is Glycerol-3-phosphate dehydrogenase [NAD(P)+].